We begin with the raw amino-acid sequence, 133 residues long: Holo-[acyl-carrier-protein] synthase (133 aa).

Mg(2+)-binding residues include Asp8 and Glu57.

This sequence belongs to the P-Pant transferase superfamily. AcpS family. Requires Mg(2+) as cofactor.

It is found in the cytoplasm. The enzyme catalyses apo-[ACP] + CoA = holo-[ACP] + adenosine 3',5'-bisphosphate + H(+). Functionally, transfers the 4'-phosphopantetheine moiety from coenzyme A to a Ser of acyl-carrier-protein. The polypeptide is Holo-[acyl-carrier-protein] synthase (Parvibaculum lavamentivorans (strain DS-1 / DSM 13023 / NCIMB 13966)).